The chain runs to 315 residues: Putative HTH-type transcriptional regulatory protein PH1808 (315 aa).

Residues Leu-131–Leu-189 enclose the HTH cro/C1-type domain. The H-T-H motif DNA-binding region spans Ile-142–Lys-161.

In Pyrococcus horikoshii (strain ATCC 700860 / DSM 12428 / JCM 9974 / NBRC 100139 / OT-3), this protein is Putative HTH-type transcriptional regulatory protein PH1808.